The chain runs to 133 residues: Global transcriptional regulator Spx (133 aa).

Cysteines 10 and 13 form a disulfide.

Belongs to the ArsC family. Spx subfamily. Interacts with the C-terminal domain of the alpha subunit of the RNAP.

It localises to the cytoplasm. In terms of biological role, global transcriptional regulator that plays a key role in stress response and exerts either positive or negative regulation of genes. Acts by interacting with the C-terminal domain of the alpha subunit of the RNA polymerase (RNAP). This interaction can enhance binding of RNAP to the promoter region of target genes and stimulate their transcription, or block interaction of RNAP with activator. This Streptococcus pneumoniae serotype 4 (strain ATCC BAA-334 / TIGR4) protein is Global transcriptional regulator Spx.